A 660-amino-acid polypeptide reads, in one-letter code: Glutenin, high molecular weight subunit 12 (660 aa).

The signal sequence occupies residues 1 to 21 (MAKRLVLFAAVVIALVALTTA). The segment covering 127–136 (YYPSVTSPRQ) has biased composition (polar residues). The segment at 127–660 (YYPSVTSPRQ…EGGDALSASQ (534 aa)) is disordered. Low complexity-rich tracts occupy residues 141–166 (PGQASPQQPGQGQQPGKWQEPGQGQQ), 187–200 (QGYYPTSLQQPGQG), 208–248 (QGYY…WQQG), and 255–275 (QQLGQGQQPGQWQQSGQGQQG). Residues 276–286 (HYPTSLQQPGQ) are compositionally biased toward polar residues. Low complexity predominate over residues 296 to 365 (QQQPAQGQQG…QQQPGQGQQG (70 aa)). The span at 370-384 (SLQQPGQQGHYPTSL) shows a compositional bias: polar residues. Low complexity-rich tracts occupy residues 385–426 (QQLG…GQQG), 478–514 (PGQRQQPGQGQHPEQGQQPGQGQQGYYPTSPQQPGQG), 522–535 (QGYYPTSPQQPGQG), and 551–577 (QQTGQAQQLGQGQQIGQVQQPGQGQQG). Positions 590–604 (QQSGQGQQSGQGHQP) are enriched in gly residues.

It belongs to the gliadin/glutenin family. Disulfide-bridge linked aggregates.

Functionally, glutenins are high-molecular weight seed storage proteins of wheat endosperm. Thought to be responsible for the visco-elastic property of wheat dough. This is Glutenin, high molecular weight subunit 12 from Triticum aestivum (Wheat).